We begin with the raw amino-acid sequence, 1942 residues long: GREB1-like protein (1942 aa).

Disordered regions lie at residues 76–101 (SSNS…YLQG), 235–306 (PFSN…GTKT), 325–373 (MDGR…HRSW), and 1123–1256 (TKTA…RTQV). Positions 81 to 90 (EDMDDEDDSD) are enriched in acidic residues. The span at 237–253 (SNSASSSKPSSSSSLSS) shows a compositional bias: low complexity. Residues 338-362 (NPLSTPSHGYRTTETGDSPASTAMS) show a composition bias toward polar residues. Basic and acidic residues predominate over residues 1127–1155 (TSREERPREGERSSGETAEHDDLPMELER). Residues 1158–1171 (SNASAATRTSGSTT) are compositionally biased toward low complexity. The span at 1172–1202 (ENGVSSSSILDKPSSQSDPCGSRTMMDSCSS) shows a compositional bias: polar residues. Residues 1212-1248 (SQAPSSSSTSSFSSASSSSSSSSSPAAQRPSQSTQAP) are compositionally biased toward low complexity. A helical transmembrane segment spans residues 1861–1881 (GVIFSGLLLYLCDSFVVSSLL).

The protein belongs to the GREB1 family.

It localises to the membrane. Its function is as follows. Plays a major role in early metanephros development. The sequence is that of GREB1-like protein (greb1l) from Danio rerio (Zebrafish).